The following is a 393-amino-acid chain: NAD(P)H-quinone oxidoreductase subunit H, chloroplastic (393 aa).

It belongs to the complex I 49 kDa subunit family. In terms of assembly, NDH is composed of at least 16 different subunits, 5 of which are encoded in the nucleus.

Its subcellular location is the plastid. The protein resides in the chloroplast thylakoid membrane. It catalyses the reaction a plastoquinone + NADH + (n+1) H(+)(in) = a plastoquinol + NAD(+) + n H(+)(out). The catalysed reaction is a plastoquinone + NADPH + (n+1) H(+)(in) = a plastoquinol + NADP(+) + n H(+)(out). Its function is as follows. NDH shuttles electrons from NAD(P)H:plastoquinone, via FMN and iron-sulfur (Fe-S) centers, to quinones in the photosynthetic chain and possibly in a chloroplast respiratory chain. The immediate electron acceptor for the enzyme in this species is believed to be plastoquinone. Couples the redox reaction to proton translocation, and thus conserves the redox energy in a proton gradient. The chain is NAD(P)H-quinone oxidoreductase subunit H, chloroplastic from Anthoceros angustus (Hornwort).